Reading from the N-terminus, the 306-residue chain is tRNA pseudouridine synthase B (306 aa).

The active-site Nucleophile is D43.

It belongs to the pseudouridine synthase TruB family. Type 1 subfamily.

It catalyses the reaction uridine(55) in tRNA = pseudouridine(55) in tRNA. Its function is as follows. Responsible for synthesis of pseudouridine from uracil-55 in the psi GC loop of transfer RNAs. In Heliobacterium modesticaldum (strain ATCC 51547 / Ice1), this protein is tRNA pseudouridine synthase B.